The primary structure comprises 140 residues: Active regulator of SIRT1 (140 aa).

Disordered regions lie at residues 1–52 (MSAS…KNKA) and 95–123 (QQVL…EGTV). The segment covering 108–120 (DRPAEKKEKKKPE) has biased composition (basic and acidic residues).

The protein belongs to the AROS family. Part of the small subunit (SSU) processome, composed of more than 70 proteins and the RNA chaperone small nucleolar RNA (snoRNA) U3.

Its subcellular location is the nucleus. The protein resides in the nucleolus. Functionally, part of the small subunit (SSU) processome, first precursor of the small eukaryotic ribosomal subunit. During the assembly of the SSU processome in the nucleolus, many ribosome biogenesis factors, an RNA chaperone and ribosomal proteins associate with the nascent pre-rRNA and work in concert to generate RNA folding, modifications, rearrangements and cleavage as well as targeted degradation of pre-ribosomal RNA by the RNA exosome. Acts as a chaperone that specifically mediates the integration of RPS19 in state post-A1. Direct regulator of SIRT1. This chain is Active regulator of SIRT1 (RPS19BP1), found in Gallus gallus (Chicken).